The following is a 301-amino-acid chain: Transposase InsD for insertion element IS2D (301 aa).

Residues 106 to 289 enclose the Integrase catalytic domain; sequence KPAVPPSKRA…SPREYLRQRA (184 aa).

Its function is as follows. Involved in the transposition of the insertion sequence IS2. This Escherichia coli (strain K12) protein is Transposase InsD for insertion element IS2D (insD2).